Reading from the N-terminus, the 511-residue chain is Fas-activated serine/threonine kinase (511 aa).

The RAP domain occupies 439 to 497; the sequence is VVLMLRERWHFCRDGRVLLGSRALRERHLGLMGYQLLPLPFEELESQRGLPQLKSYLRQ.

It belongs to the FAST protein kinase family. Interacts with TIA1; the interactions leads to TIA1 phosphorylation. Interacts with TIAR. Post-translationally, autophosphorylated on serine/threonine residues. Activated by dephosphorylation.

The protein resides in the mitochondrion matrix. It carries out the reaction L-seryl-[Fas-activated protein] + ATP = O-phospho-L-seryl-[Fas-activated protein] + ADP + H(+). It catalyses the reaction L-threonyl-[Fas-activated protein] + ATP = O-phospho-L-threonyl-[Fas-activated protein] + ADP + H(+). The enzyme catalyses L-seryl-[protein] + ATP = O-phospho-L-seryl-[protein] + ADP + H(+). The catalysed reaction is L-threonyl-[protein] + ATP = O-phospho-L-threonyl-[protein] + ADP + H(+). Functionally, phosphorylates the splicing regulator TIA1, thereby promoting the inclusion of FAS exon 6, which leads to an mRNA encoding a pro-apoptotic form of the receptor. Required for the biogenesis of some mitochondrial-encoded mRNAs, specifically stabilizes ND6 (NADH dehydrogenase complex subunit 6) mRNA, and regulates its levels. This is Fas-activated serine/threonine kinase (Fastk) from Mus musculus (Mouse).